Here is a 498-residue protein sequence, read N- to C-terminus: MDSPTNDGTCDAHPVTDEPFIDVRETHTAVVVLAGDRAFKAKKPVVTDFCDFRTAEQRERACIREFELNSRLAAQSYLGIAHLSDPSGGHAEPVVVMRRYRDKQRLASMVTAGLPVEGALDAIAEVLARFHQRAQRNRCIDTQGEVGAVARRWHENLAELRHHADKVVSGDVIRRIEHMVDEFVSGREVLFAGRIKEGCIVDGHADLLADDIFLVDGEPALLDCLEFEDELRYLDRIDDAAFLAMDLEFLGRKDLGDYFLAGYAVRSGDTAPASLRDFYIAYRAVVRAKVECVRFSQGKPEAAADAVRHLIIATQHLQHATVRLALVGGNPGTGKSTLARGVAELVGAQVISTDDVRRRLRDCGVITGEPGVLDSGLYSRANVVAVYQEALRKARLLLGSGHSVILDGTWGDPQMRACARRLAADTHSAIVEFRCSATVDVMADRIVARAGGNSDATAEIAAALAARQADWDTGHRIDTAGPRERSVGQAYHIWRSAI.

Residue 329-336 participates in ATP binding; sequence GNPGTGKS.

It is found in the secreted. Its subcellular location is the cell wall. This is an uncharacterized protein from Mycobacterium tuberculosis (strain CDC 1551 / Oshkosh).